The primary structure comprises 101 residues: Small ribosomal subunit protein bS6 (101 aa).

Belongs to the bacterial ribosomal protein bS6 family.

Its function is as follows. Binds together with bS18 to 16S ribosomal RNA. The polypeptide is Small ribosomal subunit protein bS6 (Pseudarthrobacter chlorophenolicus (strain ATCC 700700 / DSM 12829 / CIP 107037 / JCM 12360 / KCTC 9906 / NCIMB 13794 / A6) (Arthrobacter chlorophenolicus)).